Here is a 305-residue protein sequence, read N- to C-terminus: Glycine--tRNA ligase alpha subunit (305 aa).

It belongs to the class-II aminoacyl-tRNA synthetase family. Tetramer of two alpha and two beta subunits.

The protein localises to the cytoplasm. The enzyme catalyses tRNA(Gly) + glycine + ATP = glycyl-tRNA(Gly) + AMP + diphosphate. The protein is Glycine--tRNA ligase alpha subunit of Vibrio vulnificus (strain CMCP6).